A 63-amino-acid polypeptide reads, in one-letter code: Large ribosomal subunit protein uL30 (63 aa).

The protein belongs to the universal ribosomal protein uL30 family. As to quaternary structure, part of the 50S ribosomal subunit.

The sequence is that of Large ribosomal subunit protein uL30 from Xylella fastidiosa (strain 9a5c).